We begin with the raw amino-acid sequence, 672 residues long: Acetyl-coenzyme A synthetase (672 aa).

Residues 217-220 (RRGK) and Thr335 contribute to the CoA site. Residues 411-413 (GEP), 435-440 (DTWWQT), Asp529, Arg544, and Arg555 contribute to the ATP site. Positions 566, 568, and 571 each coordinate Mg(2+). Arg613 serves as a coordination point for CoA. Lys638 is subject to N6-acetyllysine.

It belongs to the ATP-dependent AMP-binding enzyme family. The cofactor is Mg(2+). Acetylated. Deacetylation by the SIR2-homolog deacetylase activates the enzyme. Post-translationally, the N-terminus is blocked.

The catalysed reaction is acetate + ATP + CoA = acetyl-CoA + AMP + diphosphate. Catalyzes the conversion of acetate into acetyl-CoA (AcCoA), an essential intermediate at the junction of anabolic and catabolic pathways. AcsA undergoes a two-step reaction. In the first half reaction, AcsA combines acetate with ATP to form acetyl-adenylate (AcAMP) intermediate. In the second half reaction, it can then transfer the acetyl group from AcAMP to the sulfhydryl group of CoA, forming the product AcCoA. This Methanothrix soehngenii (Methanosaeta concilii) protein is Acetyl-coenzyme A synthetase.